The sequence spans 132 residues: Cytidine deaminase (132 aa).

The 128-residue stretch at 1–128 (MDRQMLIKEA…ELLPGAFTAE (128 aa)) folds into the CMP/dCMP-type deaminase domain. Substrate is bound at residue 42–44 (NIE). Zn(2+) is bound at residue Cys-53. Glu-55 acts as the Proton donor in catalysis. Cys-86 and Cys-89 together coordinate Zn(2+).

This sequence belongs to the cytidine and deoxycytidylate deaminase family. It depends on Zn(2+) as a cofactor.

The enzyme catalyses cytidine + H2O + H(+) = uridine + NH4(+). It carries out the reaction 2'-deoxycytidine + H2O + H(+) = 2'-deoxyuridine + NH4(+). In terms of biological role, this enzyme scavenges exogenous and endogenous cytidine and 2'-deoxycytidine for UMP synthesis. The chain is Cytidine deaminase (cdd) from Halalkalibacterium halodurans (strain ATCC BAA-125 / DSM 18197 / FERM 7344 / JCM 9153 / C-125) (Bacillus halodurans).